Here is a 56-residue protein sequence, read N- to C-terminus: Ovomucoid (56 aa).

The 51-residue stretch at 6–56 (VDCSDHPKPACLQEQKPLCGSDNKTYDNKCSFCNAVVDSNGTLTLSHFGKC) folds into the Kazal-like domain. Cystine bridges form between Cys8-Cys38, Cys16-Cys35, and Cys24-Cys56. N-linked (GlcNAc...) asparagine glycosylation is present at Asn45.

The protein resides in the secreted. The polypeptide is Ovomucoid (Pipile pipile (Trinidad piping guan)).